The sequence spans 807 residues: Putative AC transposase (807 aa).

Disordered regions lie at residues 42–140 (GLKR…KKCT) and 785–807 (MDEDEDAIEFSKNNEDVASGSSP). Polar residues predominate over residues 84-98 (QSVSSSNANGTATDP). Repeat copies occupy residues 109-110 (PQ), 111-112 (PQ), 113-114 (PQ), 115-116 (PQ), 117-118 (PE), 119-120 (PQ), 121-122 (PQ), 123-124 (PQ), 125-126 (PE), and 127-128 (PE). The segment at 109-128 (PQPQPQPQPEPQPQPQPEPE) is 10 X 2 AA tandem repeats of P-[QE]. The span at 110 to 125 (QPQPQPQPEPQPQPQP) shows a compositional bias: pro residues.

This chain is Putative AC transposase, found in Zea mays (Maize).